An 831-amino-acid polypeptide reads, in one-letter code: Isethionate sulfite-lyase (831 aa).

In terms of domain architecture, PFL spans 32–701 (PRVFRLLERF…VVSATPNGRT (670 aa)). 2-hydroxyethane-1-sulfonate is bound by residues Arg189, Gln193, 468 to 470 (CTE), and Arg679. Cys468 serves as the catalytic Cysteine radical intermediate. Glu470 (proton acceptor) is an active-site residue. The Glycine radical domain maps to 708-831 (DGSSASHGAD…LIARTEHDVM (124 aa)). Residue Gly806 is modified to Glycine radical.

This sequence belongs to the glycyl radical enzyme (GRE) family. Homodimer. Post-translationally, requires the activating protein IslB to generate the key active site glycyl radical on Gly-806 that is involved in catalysis.

It carries out the reaction 2-hydroxyethane-1-sulfonate = acetaldehyde + sulfite + H(+). It participates in organosulfur degradation; alkanesulfonate degradation. Its function is as follows. Involved in an anaerobic respiration pathway that converts the sulfonate isethionate (2-hydroxyethanesulfonate) to ammonia, acetate and sulfide. Catalyzes the radical-mediated C-S bond cleavage of isethionate (2-hydroxyethanesulfonate) to form sulfite and acetaldehyde. This Desulfovibrio desulfuricans (strain ATCC 27774 / DSM 6949 / MB) protein is Isethionate sulfite-lyase.